We begin with the raw amino-acid sequence, 93 residues long: Parbolysin P5 (93 aa).

Intrachain disulfides connect Cys16-Cys37, Cys22-Cys33, and Cys47-Cys60.

The protein belongs to the worm cytolysin family. In terms of tissue distribution, localized within the skin and proboscis and are most readily isolated from body mucus secretions.

The protein localises to the secreted. Its function is as follows. Cytolysin that shows hemolytic activity (on bovine erythrocytes, HC(50)=5.75 mg/ml). This hemolytic activity is completely inhibited by small unilamelar vesicles composed of PC/PG, PC/PI and PC/PS in 1:1 molar ratios (with at least 100 mg/ml concentration). This is Parbolysin P5 from Parborlasia corrugatus (Antarctic nemertean worm).